The sequence spans 224 residues: Toxin coregulated pilin (224 aa).

Residues 1 to 25 constitute a propeptide, atypical leader sequence; the sequence is MQLLKQLFKKKFVKEEHDKKTGQEG. The residue at position 26 (methionine 26) is an N-methylmethionine. The helical transmembrane segment at 26 to 46 threads the bilayer; that stretch reads MTLLEVIIVLGIMGVVSAGVV. A disulfide bond links cysteine 145 and cysteine 211.

The protein resides in the fimbrium. The protein localises to the membrane. Functionally, major component of the toxin co-regulated pilus (tcp) which is a type IV pilus essential for bacterial aggregation and subsequent colonization in the host small intestine. The sequence is that of Toxin coregulated pilin (tcpA) from Vibrio cholerae.